A 211-amino-acid chain; its full sequence is Protein-L-isoaspartate O-methyltransferase (211 aa).

The active site involves serine 62.

Belongs to the methyltransferase superfamily. L-isoaspartyl/D-aspartyl protein methyltransferase family.

The protein localises to the cytoplasm. It carries out the reaction [protein]-L-isoaspartate + S-adenosyl-L-methionine = [protein]-L-isoaspartate alpha-methyl ester + S-adenosyl-L-homocysteine. Its function is as follows. Catalyzes the methyl esterification of L-isoaspartyl residues in peptides and proteins that result from spontaneous decomposition of normal L-aspartyl and L-asparaginyl residues. It plays a role in the repair and/or degradation of damaged proteins. The sequence is that of Protein-L-isoaspartate O-methyltransferase from Shewanella piezotolerans (strain WP3 / JCM 13877).